The sequence spans 102 residues: NADH-quinone oxidoreductase subunit K (102 aa).

Helical transmembrane passes span 5 to 25 (ITHY…GIFL), 31 to 51 (IIIL…FVAF), and 66 to 86 (FVLT…VVFF).

It belongs to the complex I subunit 4L family. NDH-1 is composed of 14 different subunits. Subunits NuoA, H, J, K, L, M, N constitute the membrane sector of the complex.

It is found in the cell inner membrane. It catalyses the reaction a quinone + NADH + 5 H(+)(in) = a quinol + NAD(+) + 4 H(+)(out). Functionally, NDH-1 shuttles electrons from NADH, via FMN and iron-sulfur (Fe-S) centers, to quinones in the respiratory chain. The immediate electron acceptor for the enzyme in this species is believed to be ubiquinone. Couples the redox reaction to proton translocation (for every two electrons transferred, four hydrogen ions are translocated across the cytoplasmic membrane), and thus conserves the redox energy in a proton gradient. The chain is NADH-quinone oxidoreductase subunit K from Bartonella grahamii (strain as4aup).